A 242-amino-acid chain; its full sequence is Biosynthetic peptidoglycan transglycosylase (242 aa).

The chain crosses the membrane as a helical span at residues 19–39; the sequence is ILVVLAVFWGGGIALFSVVPV.

The protein belongs to the glycosyltransferase 51 family.

It is found in the cell inner membrane. The enzyme catalyses [GlcNAc-(1-&gt;4)-Mur2Ac(oyl-L-Ala-gamma-D-Glu-L-Lys-D-Ala-D-Ala)](n)-di-trans,octa-cis-undecaprenyl diphosphate + beta-D-GlcNAc-(1-&gt;4)-Mur2Ac(oyl-L-Ala-gamma-D-Glu-L-Lys-D-Ala-D-Ala)-di-trans,octa-cis-undecaprenyl diphosphate = [GlcNAc-(1-&gt;4)-Mur2Ac(oyl-L-Ala-gamma-D-Glu-L-Lys-D-Ala-D-Ala)](n+1)-di-trans,octa-cis-undecaprenyl diphosphate + di-trans,octa-cis-undecaprenyl diphosphate + H(+). The protein operates within cell wall biogenesis; peptidoglycan biosynthesis. Functionally, peptidoglycan polymerase that catalyzes glycan chain elongation from lipid-linked precursors. This chain is Biosynthetic peptidoglycan transglycosylase, found in Citrobacter koseri (strain ATCC BAA-895 / CDC 4225-83 / SGSC4696).